Reading from the N-terminus, the 425-residue chain is Riboflavin biosynthesis protein RibBA (425 aa).

The tract at residues 1-204 (MTRLDSVERA…IADLIEWRRK (204 aa)) is DHBP synthase. Residues 28–29 (RE), aspartate 33, 141–145 (RPGHT), and glutamate 165 contribute to the D-ribulose 5-phosphate site. Glutamate 29 is a Mg(2+) binding site. Histidine 144 contacts Mg(2+). Residues 205-425 (HEKHIERVAE…HLPGEFGGAL (221 aa)) form a GTP cyclohydrolase II region. 259-263 (RVHSE) is a binding site for GTP. The Zn(2+) site is built by cysteine 264, cysteine 275, and cysteine 277. Residues glutamine 280, 303–305 (EGR), and threonine 325 contribute to the GTP site. Aspartate 337 acts as the Proton acceptor; for GTP cyclohydrolase activity in catalysis. Catalysis depends on arginine 339, which acts as the Nucleophile; for GTP cyclohydrolase activity. Residues threonine 360 and lysine 365 each contribute to the GTP site.

In the N-terminal section; belongs to the DHBP synthase family. This sequence in the C-terminal section; belongs to the GTP cyclohydrolase II family. It depends on Mg(2+) as a cofactor. The cofactor is Mn(2+). Requires Zn(2+) as cofactor.

It catalyses the reaction D-ribulose 5-phosphate = (2S)-2-hydroxy-3-oxobutyl phosphate + formate + H(+). It carries out the reaction GTP + 4 H2O = 2,5-diamino-6-hydroxy-4-(5-phosphoribosylamino)-pyrimidine + formate + 2 phosphate + 3 H(+). Its pathway is cofactor biosynthesis; riboflavin biosynthesis; 2-hydroxy-3-oxobutyl phosphate from D-ribulose 5-phosphate: step 1/1. The protein operates within cofactor biosynthesis; riboflavin biosynthesis; 5-amino-6-(D-ribitylamino)uracil from GTP: step 1/4. Catalyzes the conversion of D-ribulose 5-phosphate to formate and 3,4-dihydroxy-2-butanone 4-phosphate. In terms of biological role, catalyzes the conversion of GTP to 2,5-diamino-6-ribosylamino-4(3H)-pyrimidinone 5'-phosphate (DARP), formate and pyrophosphate. This is Riboflavin biosynthesis protein RibBA from Mycobacterium marinum (strain ATCC BAA-535 / M).